Here is a 313-residue protein sequence, read N- to C-terminus: 2-oxoglutarate-dependent dioxygenase eupC (313 aa).

The Fe2OG dioxygenase domain maps to 187 to 284; that stretch reads PSIPMRFLHY…LNAKALDGSG (98 aa). H212, D214, and H263 together coordinate Fe cation. K274 contacts 2-oxoglutarate.

It belongs to the iron/ascorbate-dependent oxidoreductase family. Requires Fe(2+) as cofactor.

Its pathway is secondary metabolite biosynthesis; terpenoid biosynthesis. Its function is as follows. 2-oxoglutarate-dependent dioxygenase; part of the gene cluster that mediates the biosynthesis of eupenifeldin, a bistropolone meroterpenoid that acts as an antitumor agent. The first step of eupenifeldin biosynthesis is the biosynthesis of 3-methylorcinaldehyde performed by the non-reducing polyketide synthase eupA. Oxidative dearomatization of 3-methylorcinaldehyde likely catalyzed by the FAD-dependent monooxygenase eupB is followed by oxidative ring expansion by the 2-oxoglutarate-dependent dioxygenase eupC to provide the first tropolone metabolite, tropolone stipitaldehyde. In parallel, generation of sesquiterpene alpha-humulene from farnesylpyrophosphate (FPP) is catalyzed by the terpene cyclase eupE. The cytochrome P450 monooxygenase eupD then hydroxylates humulene to humulenol. The putative Diels-Alderase eupF probably catalyzes the formation of the tropolone-humulene skeleton by linking humulenol and the polyketide moiety. The short-chain dehydrogenase/reductase eupG and the flavin-dependent monooxygenase eupH are also essential for eupenifeldin biosynthesis and are likely the additional decorating enzymes of the tropolone-humulene skeleton to produce final eupenifeldin or derivatives. The chain is 2-oxoglutarate-dependent dioxygenase eupC from Phoma sp.